Reading from the N-terminus, the 190-residue chain is Threonylcarbamoyl-AMP synthase (190 aa).

In terms of domain architecture, YrdC-like spans 7–190 (GDAIAAAIDV…ALTGELFRQG (184 aa)).

It belongs to the SUA5 family. TsaC subfamily.

Its subcellular location is the cytoplasm. It catalyses the reaction L-threonine + hydrogencarbonate + ATP = L-threonylcarbamoyladenylate + diphosphate + H2O. Functionally, required for the formation of a threonylcarbamoyl group on adenosine at position 37 (t(6)A37) in tRNAs that read codons beginning with adenine. Catalyzes the conversion of L-threonine, HCO(3)(-)/CO(2) and ATP to give threonylcarbamoyl-AMP (TC-AMP) as the acyladenylate intermediate, with the release of diphosphate. In Escherichia coli O157:H7, this protein is Threonylcarbamoyl-AMP synthase.